The sequence spans 277 residues: 4-hydroxy-3-methylbut-2-enyl diphosphate reductase (277 aa).

Cys12 contributes to the [4Fe-4S] cluster binding site. (2E)-4-hydroxy-3-methylbut-2-enyl diphosphate is bound by residues His36 and His70. 2 residues coordinate dimethylallyl diphosphate: His36 and His70. Isopentenyl diphosphate is bound by residues His36 and His70. [4Fe-4S] cluster is bound at residue Cys92. His120 contributes to the (2E)-4-hydroxy-3-methylbut-2-enyl diphosphate binding site. His120 contributes to the dimethylallyl diphosphate binding site. His120 lines the isopentenyl diphosphate pocket. Residue Glu122 is the Proton donor of the active site. Residue Thr158 coordinates (2E)-4-hydroxy-3-methylbut-2-enyl diphosphate. Cys186 serves as a coordination point for [4Fe-4S] cluster. Positions 214, 216, and 258 each coordinate (2E)-4-hydroxy-3-methylbut-2-enyl diphosphate. Dimethylallyl diphosphate contacts are provided by Ser214, Asn216, and Ser258. Positions 214, 216, and 258 each coordinate isopentenyl diphosphate.

It belongs to the IspH family. It depends on [4Fe-4S] cluster as a cofactor.

The catalysed reaction is isopentenyl diphosphate + 2 oxidized [2Fe-2S]-[ferredoxin] + H2O = (2E)-4-hydroxy-3-methylbut-2-enyl diphosphate + 2 reduced [2Fe-2S]-[ferredoxin] + 2 H(+). It carries out the reaction dimethylallyl diphosphate + 2 oxidized [2Fe-2S]-[ferredoxin] + H2O = (2E)-4-hydroxy-3-methylbut-2-enyl diphosphate + 2 reduced [2Fe-2S]-[ferredoxin] + 2 H(+). It participates in isoprenoid biosynthesis; dimethylallyl diphosphate biosynthesis; dimethylallyl diphosphate from (2E)-4-hydroxy-3-methylbutenyl diphosphate: step 1/1. Its pathway is isoprenoid biosynthesis; isopentenyl diphosphate biosynthesis via DXP pathway; isopentenyl diphosphate from 1-deoxy-D-xylulose 5-phosphate: step 6/6. In terms of biological role, catalyzes the conversion of 1-hydroxy-2-methyl-2-(E)-butenyl 4-diphosphate (HMBPP) into a mixture of isopentenyl diphosphate (IPP) and dimethylallyl diphosphate (DMAPP). Acts in the terminal step of the DOXP/MEP pathway for isoprenoid precursor biosynthesis. The sequence is that of 4-hydroxy-3-methylbut-2-enyl diphosphate reductase from Campylobacter jejuni subsp. doylei (strain ATCC BAA-1458 / RM4099 / 269.97).